A 343-amino-acid polypeptide reads, in one-letter code: L-threonine 3-dehydrogenase (343 aa).

Residue Cys-40 coordinates Zn(2+). Residues Thr-42 and His-45 each act as charge relay system in the active site. Positions 65, 66, 95, 98, 101, and 109 each coordinate Zn(2+). Residues Ile-177, Asp-197, Arg-202, 264–266, and 288–289 contribute to the NAD(+) site; these read LGI and IY.

Belongs to the zinc-containing alcohol dehydrogenase family. Homotetramer. Requires Zn(2+) as cofactor.

Its subcellular location is the cytoplasm. It catalyses the reaction L-threonine + NAD(+) = (2S)-2-amino-3-oxobutanoate + NADH + H(+). It participates in amino-acid degradation; L-threonine degradation via oxydo-reductase pathway; glycine from L-threonine: step 1/2. In terms of biological role, catalyzes the NAD(+)-dependent oxidation of L-threonine to 2-amino-3-ketobutyrate. In Aliivibrio fischeri (strain MJ11) (Vibrio fischeri), this protein is L-threonine 3-dehydrogenase.